A 180-amino-acid chain; its full sequence is Acireductone dioxygenase (180 aa).

Fe(2+) is bound by residues His97, His99, Glu103, and His141. Residues His97, His99, Glu103, and His141 each coordinate Ni(2+).

Belongs to the acireductone dioxygenase (ARD) family. In terms of assembly, monomer. Fe(2+) serves as cofactor. It depends on Ni(2+) as a cofactor.

The enzyme catalyses 1,2-dihydroxy-5-(methylsulfanyl)pent-1-en-3-one + O2 = 3-(methylsulfanyl)propanoate + CO + formate + 2 H(+). It catalyses the reaction 1,2-dihydroxy-5-(methylsulfanyl)pent-1-en-3-one + O2 = 4-methylsulfanyl-2-oxobutanoate + formate + 2 H(+). It functions in the pathway amino-acid biosynthesis; L-methionine biosynthesis via salvage pathway; L-methionine from S-methyl-5-thio-alpha-D-ribose 1-phosphate: step 5/6. Its function is as follows. Catalyzes 2 different reactions between oxygen and the acireductone 1,2-dihydroxy-3-keto-5-methylthiopentene (DHK-MTPene) depending upon the metal bound in the active site. Fe-containing acireductone dioxygenase (Fe-ARD) produces formate and 2-keto-4-methylthiobutyrate (KMTB), the alpha-ketoacid precursor of methionine in the methionine recycle pathway. Ni-containing acireductone dioxygenase (Ni-ARD) produces methylthiopropionate, carbon monoxide and formate, and does not lie on the methionine recycle pathway. The sequence is that of Acireductone dioxygenase from Citrobacter koseri (strain ATCC BAA-895 / CDC 4225-83 / SGSC4696).